The chain runs to 267 residues: Tryptophan synthase alpha chain (267 aa).

Catalysis depends on proton acceptor residues glutamate 43 and aspartate 54.

Belongs to the TrpA family. In terms of assembly, tetramer of two alpha and two beta chains.

The enzyme catalyses (1S,2R)-1-C-(indol-3-yl)glycerol 3-phosphate + L-serine = D-glyceraldehyde 3-phosphate + L-tryptophan + H2O. Its pathway is amino-acid biosynthesis; L-tryptophan biosynthesis; L-tryptophan from chorismate: step 5/5. Its function is as follows. The alpha subunit is responsible for the aldol cleavage of indoleglycerol phosphate to indole and glyceraldehyde 3-phosphate. The polypeptide is Tryptophan synthase alpha chain (Bacillus pumilus (strain SAFR-032)).